The primary structure comprises 207 residues: MANVKLFDQTGKEVSTVELNDAIFGIEPNESVVFDVVISQRASLRQGTHAVKNRSAVSGGGRKPWRQKGTGRARQGSIRSPQWRGGGVVFGPTPRSYGYKLPQKVRRLALKSVYSAKVAEDKFVAVEALSFAAPKTAEFANVLSALSIDSKVLVIVEEGNKFAELSARNLANVTVATPATASVLDIVNADKLLVTKEAISSIEEVLA.

The disordered stretch occupies residues 49-78 (HAVKNRSAVSGGGRKPWRQKGTGRARQGSI).

This sequence belongs to the universal ribosomal protein uL4 family. Part of the 50S ribosomal subunit.

In terms of biological role, one of the primary rRNA binding proteins, this protein initially binds near the 5'-end of the 23S rRNA. It is important during the early stages of 50S assembly. It makes multiple contacts with different domains of the 23S rRNA in the assembled 50S subunit and ribosome. Forms part of the polypeptide exit tunnel. This Streptococcus thermophilus (strain CNRZ 1066) protein is Large ribosomal subunit protein uL4.